The primary structure comprises 941 residues: Coiled-coil and C2 domain-containing protein 1A (941 aa).

Threonine 91 is subject to Phosphothreonine. Disordered stretches follow at residues threonine 183 to proline 248 and serine 301 to proline 336. Over residues alanine 228–proline 239 the composition is skewed to polar residues. The residue at position 247 (serine 247) is a Phosphoserine. Over residues leucine 303 to alanine 318 the composition is skewed to pro residues. Residues lysine 338–histidine 384 are a coiled coil. Residues alanine 428 to glutamine 482 are disordered. The residue at position 434 (serine 434) is a Phosphoserine. Positions alanine 467–glycine 476 are enriched in low complexity. Positions lysine 475–valine 508 form a coiled coil. A C2 domain is found at arginine 628 to leucine 762.

Belongs to the CC2D1 family. In terms of tissue distribution, strongly expressed in several brain areas including frontal cortex, cortex, mesencephalon, hippocampus, midbrain and hypothalamus. Also expressed in testis and at low levels in pituitary, liver and kidney. In brain the highest levels are detected in hippocampal pyramidal cells and raphe nuclei.

It localises to the cytoplasm. It is found in the nucleus. The protein resides in the cytoskeleton. Its subcellular location is the microtubule organizing center. The protein localises to the centrosome. Transcription factor that binds specifically to the DRE (dual repressor element) and represses 5-HT1A gene transcription though this element. Mediates HDAC-independent repression of HTR1A promoter. CAMK2G inhibits CC2D1a-induced repression of the HTR1A. May play a role in the altered regulation of 5-HT1A receptors associated with anxiety and major depression. Performs essential function in controlling functional maturation of synapses. The sequence is that of Coiled-coil and C2 domain-containing protein 1A (Cc2d1a) from Rattus norvegicus (Rat).